A 593-amino-acid polypeptide reads, in one-letter code: A-type ATP synthase subunit A (593 aa).

Residue Gly236 to Thr243 coordinates ATP.

This sequence belongs to the ATPase alpha/beta chains family. Has multiple subunits with at least A(3), B(3), C, D, E, F, H, I and proteolipid K(x).

The protein localises to the cell membrane. The catalysed reaction is ATP + H2O + 4 H(+)(in) = ADP + phosphate + 5 H(+)(out). In terms of biological role, produces ATP from ADP in the presence of a proton gradient across the membrane. The archaeal alpha chain is a catalytic subunit. Functionally, component of the A-type ATP synthase that produces ATP from ADP in the presence of a proton gradient across the membrane. The A chain is the catalytic subunit. The chain is A-type ATP synthase subunit A from Pyrobaculum aerophilum (strain ATCC 51768 / DSM 7523 / JCM 9630 / CIP 104966 / NBRC 100827 / IM2).